The chain runs to 272 residues: Undecaprenyl-diphosphatase (272 aa).

7 helical membrane-spanning segments follow: residues 39-59 (SGLT…FVYF), 87-107 (WMIV…EQPI), 113-133 (SSPL…GLTD), 145-165 (ITLG…VPGV), 188-208 (FSFL…GLHL), 220-240 (PMLV…AFLL), and 251-271 (FVWY…VGLL).

This sequence belongs to the UppP family.

Its subcellular location is the cell inner membrane. The catalysed reaction is di-trans,octa-cis-undecaprenyl diphosphate + H2O = di-trans,octa-cis-undecaprenyl phosphate + phosphate + H(+). Functionally, catalyzes the dephosphorylation of undecaprenyl diphosphate (UPP). Confers resistance to bacitracin. The chain is Undecaprenyl-diphosphatase from Trichlorobacter lovleyi (strain ATCC BAA-1151 / DSM 17278 / SZ) (Geobacter lovleyi).